A 374-amino-acid polypeptide reads, in one-letter code: Golgi-associated kinase 1B (374 aa).

The Cytoplasmic segment spans residues 1–38 (MSPDRTGRGSSSSSSSLKRLVCKSFVRAWGRRRPNLRR). The chain crosses the membrane as a helical; Signal-anchor for type II membrane protein span at residues 39-61 (AVLLICTASAIYGIVIASQVLRG). The Extracellular segment spans residues 62-374 (STHPGKALRK…LLQVYTRLDR (313 aa)). The span at 136-146 (VRPKKRRKYGA) shows a compositional bias: basic residues. The disordered stretch occupies residues 136 to 177 (VRPKKRRKYGARRPGVVQDTESKKDTLWSKVPNSQHKSQAQS). A compositionally biased stretch (polar residues) spans 166-177 (VPNSQHKSQAQS). 2 N-linked (GlcNAc...) asparagine glycosylation sites follow: asparagine 281 and asparagine 314.

Belongs to the GASK family.

It is found in the golgi apparatus membrane. The sequence is that of Golgi-associated kinase 1B from Xenopus laevis (African clawed frog).